Reading from the N-terminus, the 463-residue chain is Siroheme synthase 1 (463 aa).

A precorrin-2 dehydrogenase /sirohydrochlorin ferrochelatase region spans residues Met1–Val203. Residues Glu22–Val23 and Pro43–His44 each bind NAD(+). Ser128 is subject to Phosphoserine. Residues Gly215–Val463 form a uroporphyrinogen-III C-methyltransferase region. Pro224 contributes to the S-adenosyl-L-methionine binding site. Asp247 serves as the catalytic Proton acceptor. Lys269 serves as the catalytic Proton donor. S-adenosyl-L-methionine-binding positions include Gly300–Asp302, Ile305, Thr330–Ala331, Met382, and Gly411.

This sequence in the N-terminal section; belongs to the precorrin-2 dehydrogenase / sirohydrochlorin ferrochelatase family. The protein in the C-terminal section; belongs to the precorrin methyltransferase family.

It carries out the reaction uroporphyrinogen III + 2 S-adenosyl-L-methionine = precorrin-2 + 2 S-adenosyl-L-homocysteine + H(+). The catalysed reaction is precorrin-2 + NAD(+) = sirohydrochlorin + NADH + 2 H(+). It catalyses the reaction siroheme + 2 H(+) = sirohydrochlorin + Fe(2+). Its pathway is cofactor biosynthesis; adenosylcobalamin biosynthesis; precorrin-2 from uroporphyrinogen III: step 1/1. It participates in cofactor biosynthesis; adenosylcobalamin biosynthesis; sirohydrochlorin from precorrin-2: step 1/1. It functions in the pathway porphyrin-containing compound metabolism; siroheme biosynthesis; precorrin-2 from uroporphyrinogen III: step 1/1. The protein operates within porphyrin-containing compound metabolism; siroheme biosynthesis; siroheme from sirohydrochlorin: step 1/1. Its pathway is porphyrin-containing compound metabolism; siroheme biosynthesis; sirohydrochlorin from precorrin-2: step 1/1. Functionally, multifunctional enzyme that catalyzes the SAM-dependent methylations of uroporphyrinogen III at position C-2 and C-7 to form precorrin-2 via precorrin-1. Then it catalyzes the NAD-dependent ring dehydrogenation of precorrin-2 to yield sirohydrochlorin. Finally, it catalyzes the ferrochelation of sirohydrochlorin to yield siroheme. The protein is Siroheme synthase 1 of Aeromonas hydrophila subsp. hydrophila (strain ATCC 7966 / DSM 30187 / BCRC 13018 / CCUG 14551 / JCM 1027 / KCTC 2358 / NCIMB 9240 / NCTC 8049).